Here is a 41-residue protein sequence, read N- to C-terminus: Competence-stimulating peptide type 1 (41 aa).

The propeptide occupies 1-24 (MKNTVKLEQFVALKEKDLQKIKGG).

Belongs to the ComC family.

The protein resides in the secreted. Acts as a pheromone, induces cells to develop competence for genetic transformation. This chain is Competence-stimulating peptide type 1 (comC1), found in Streptococcus pneumoniae.